Here is a 111-residue protein sequence, read N- to C-terminus: Parvalbumin alpha (111 aa).

Thr1 bears the N-acetylthreonine; in form C2 mark. EF-hand domains are found at residues 40–75 (KPDD…FAAG) and 79–111 (LTAN…VKAA). Residues Asp53, Asp55, Ser57, Tyr59, Glu61, Glu64, Asp92, Asp94, Asp96, Lys98, and Glu103 each contribute to the Ca(2+) site.

This sequence belongs to the parvalbumin family. Post-translationally, acetylation of Thr-1 converts C1 to C2.

In terms of biological role, in muscle, parvalbumin is thought to be involved in relaxation after contraction. It binds two calcium ions. This Latimeria chalumnae (Coelacanth) protein is Parvalbumin alpha.